A 109-amino-acid polypeptide reads, in one-letter code: Putative gametogenetin-binding protein 1 (109 aa).

The interaction with GGN stretch occupies residues 24-109 (KAFRSTDTVG…KGEMGNWPPE (86 aa)).

Interacts with CCDC159. Interacts with GGN.

It localises to the cytoplasm. The protein resides in the membrane. It is found in the golgi apparatus. Functionally, may be involved in spermatogenesis. This Homo sapiens (Human) protein is Putative gametogenetin-binding protein 1 (GGNBP1).